A 359-amino-acid polypeptide reads, in one-letter code: Phospho-N-acetylmuramoyl-pentapeptide-transferase (359 aa).

10 helical membrane-spanning segments follow: residues Val23–Ala43, Met68–Phe88, Val92–Met112, Met126–Gly146, Ala165–Ala185, Gly198–Ala218, Ser235–Tyr255, Val262–Val282, Ile287–Val307, and Lys336–Leu356.

This sequence belongs to the glycosyltransferase 4 family. MraY subfamily. It depends on Mg(2+) as a cofactor.

The protein localises to the cell inner membrane. It catalyses the reaction UDP-N-acetyl-alpha-D-muramoyl-L-alanyl-gamma-D-glutamyl-meso-2,6-diaminopimeloyl-D-alanyl-D-alanine + di-trans,octa-cis-undecaprenyl phosphate = di-trans,octa-cis-undecaprenyl diphospho-N-acetyl-alpha-D-muramoyl-L-alanyl-D-glutamyl-meso-2,6-diaminopimeloyl-D-alanyl-D-alanine + UMP. The protein operates within cell wall biogenesis; peptidoglycan biosynthesis. Catalyzes the initial step of the lipid cycle reactions in the biosynthesis of the cell wall peptidoglycan: transfers peptidoglycan precursor phospho-MurNAc-pentapeptide from UDP-MurNAc-pentapeptide onto the lipid carrier undecaprenyl phosphate, yielding undecaprenyl-pyrophosphoryl-MurNAc-pentapeptide, known as lipid I. The sequence is that of Phospho-N-acetylmuramoyl-pentapeptide-transferase from Helicobacter hepaticus (strain ATCC 51449 / 3B1).